Here is a 459-residue protein sequence, read N- to C-terminus: WD repeat-containing protein 41 (459 aa).

6 WD repeats span residues 40–79 (KAHH…KLLE), 82–128 (GHTQ…QVQR), 131–168 (CFQS…LCKT), 220–258 (DHQD…MQAY), 321–359 (AHDS…QLAA), and 403–441 (GHSS…SGLR).

As to quaternary structure, component of the C9orf72-SMCR8 complex, at least composed of C9orf72, SMCR8 and WDR41. The complex is formed of two protomers, each individually consisting of one molecule each of C9orf72, SMCR8 and WDR41. The protomers homodimerize via an interaction between C9orf72 (via C-terminus) and SMCR8 (via N-terminus). Within each protomer SMCR8 (via DENN domain) acts as a bridging protein between WDR41 (via C-terminus and N-terminus) and C9orf72 (via C-terminus). The C9orf72-SMCR8 complex associates with the ULK1/ATG1 kinase complex.

Its subcellular location is the cytoplasm. Functionally, non-catalytic component of the C9orf72-SMCR8 complex, a complex that has guanine nucleotide exchange factor (GEF) activity and regulates autophagy. The C9orf72-SMCR8 complex promotes the exchange of GDP to GTP, converting inactive GDP-bound RAB8A and RAB39B into their active GTP-bound form, thereby promoting autophagosome maturation. As part of the C9orf72-SMCR8 complex, stimulates RAB8A and RAB11A GTPase activity in vitro, however WDR42 is shown not be an essential complex component for this function. The C9orf72-SMCR8 complex also acts as a negative regulator of autophagy initiation by interacting with the ULK1/ATG1 kinase complex and inhibiting its protein kinase activity. The polypeptide is WD repeat-containing protein 41 (Homo sapiens (Human)).